The sequence spans 255 residues: MLATKVLQQGEADRPWLIWLHGLLGNNNEWRVIASRCPEWPSLAIDLPGHGDSVAVVCTSFDDISAQISATLQMHGIERYWLVGYSLGGRIAMYHACHGEPRGLQGVIIEGGNPGLADAAQRELRLAHDTAWAERFRREPLAQVLADWYQQPVFANLSAVHRDALIDARSDNAGAAVADMLEATSLGTQPCLAPQLQQLAVPLVVLCGADDHKFQQLTRDAGLPLRIVPQAGHNSHLANPQAFAAELRNFLVNPG.

The protein belongs to the AB hydrolase superfamily. MenH family. Monomer.

The catalysed reaction is 5-enolpyruvoyl-6-hydroxy-2-succinyl-cyclohex-3-ene-1-carboxylate = (1R,6R)-6-hydroxy-2-succinyl-cyclohexa-2,4-diene-1-carboxylate + pyruvate. It functions in the pathway quinol/quinone metabolism; 1,4-dihydroxy-2-naphthoate biosynthesis; 1,4-dihydroxy-2-naphthoate from chorismate: step 3/7. It participates in quinol/quinone metabolism; menaquinone biosynthesis. Catalyzes a proton abstraction reaction that results in 2,5-elimination of pyruvate from 2-succinyl-5-enolpyruvyl-6-hydroxy-3-cyclohexene-1-carboxylate (SEPHCHC) and the formation of 2-succinyl-6-hydroxy-2,4-cyclohexadiene-1-carboxylate (SHCHC). The protein is 2-succinyl-6-hydroxy-2,4-cyclohexadiene-1-carboxylate synthase of Serratia proteamaculans (strain 568).